The sequence spans 85 residues: Sugar transporter SemiSWEET (85 aa).

Positions Glu2 to Pro59 constitute a PQ-loop domain. 3 helical membrane-spanning segments follow: residues Ile5–Val25, Ile33–Ile53, and Asp57–Tyr77.

Homodimer.

The protein resides in the cell membrane. The homodimer mediates transmembrane sugar transport down a concentration gradient. Transport is probably effected by rocking-type movements, where a cargo-binding cavity opens first on one and then on the other side of the membrane. In Leptospira biflexa serovar Patoc (strain Patoc 1 / ATCC 23582 / Paris), this protein is Sugar transporter SemiSWEET.